Reading from the N-terminus, the 361-residue chain is Peptide chain release factor 1 (361 aa).

Gln-235 bears the N5-methylglutamine mark.

Belongs to the prokaryotic/mitochondrial release factor family. Post-translationally, methylated by PrmC. Methylation increases the termination efficiency of RF1.

The protein localises to the cytoplasm. Its function is as follows. Peptide chain release factor 1 directs the termination of translation in response to the peptide chain termination codons UAG and UAA. In Xanthomonas campestris pv. campestris (strain B100), this protein is Peptide chain release factor 1.